A 1376-amino-acid polypeptide reads, in one-letter code: MDRRSEAFKIPVPEVIPAGQILSTIEVSSHRTLFDFFKQIRSDDNGLYAAQFDVLLGTYCNTLTLVRFLELGLSVSCVCTKFPELNYVNDGTIQFEVQQPMIARDGPHPVDQPTHTYMMKHIEQRSLSAAFAIAAEALGLIGGTTLDGTQISSSLRVRAIQQLARNVQTVLDSFERGTADQLLRVLLEKAPPLTLLAPLQIYRDEGRLASRVNRAVLVSELKRRVIEDTFFLTKHERNRKELVVARLAELVNCTAPSVAVTRMTHSDTKGRPVDGVVVTTAGVRQRLLQGILTLEDMAADVPVTYGEMMITGTNLVTALVMGKAVRNLDDVAHHLLGMQRDQVRANEKLIKDYEDVPSTARVRADLVLVGDRLVFLEALEKRVYQATNVPYPLVGNLDLTFIIPLGIFKPATDRYSRHAGSFTPTPGQPDPRTYPPQTVYFFNKDGNLVQLSFDSAAGTVCHSSFLDVDSVLVAIRREPHELHCAFGAYVTLPPAGTLLDQMRRFFERWHMLMPARPRWTAEALMTIDQLLSPGNANLRLELHPAFDFFVAPADVVIPGPFDMPNVMPTVMAMPRLINGNIPLPLCPVEFRDSRGFELSVDRHRLNPATVLAVRGAFRDANYPMVFYILEAVIHGSERTFCALARLIIQCIVSYWRNTHQVAFVNNFYMIMYINAYLGNGELPEECTAIYRDLLEHVQALRRLVAEYTVPGEAVGGQGHDALNNVLLDPALLPPLIWDCDPILHRADMGRARAQELWVDGVDYAAIPWVEMAEVNFGNTGGHLVHNRPIRGENKRNPIVPHHDPEWSVLSKIYYYAVVPAFSRGNCCTMGVRYDRVYPLVQTVVIPDLGAEEIAPTSPSDPRHPLNPRHLVPNTLNILFHNARVAVDTDALLLLQEVVTNMAERTTPVLATAAPDAGTATAVTQEMRTFDGTLHHGILMMAYQRNDETLLEGTFFYPAPVNALFACPEHLGALPGLNAEVLEAARDVPPVPHFFGGNYYATVRQPVAQHAVQSRADENTLTYALMAGYFKLGPIALSHQFATGFHPGFAFTVVRQDRFLTENILFAEKASESYFMGQLQVNRHEAVGGVNFVLTQPRANVDLGVGFTAAYAAAALRTPVTDMGNLPQNLYLTRGTIPMLDGDADAYLRRVVNTGNRLGPQGPRPIFGQLMPATPAGVAHGQAAVCEFIVTPVSADLNYFRRPCNPRGRSAGPVYACDGEADAVDVMYDHTQGDPAYPSRATVNPWASQRNSYGDRLYNGKYNLNGASPVYSPCFKFFTPTEVEAKGRNMTQLIADVGASVAPSTSNTEIQFKRPHGSTDLVEDPCSLFQEAYPLLSSTDTALLRTPHIGEIGADEGHFAQYLIRDESPLKGCFPRI.

Belongs to the herpesviridae major capsid protein family. In terms of assembly, homomultimer. Makes the hexons and eleven out of twelve pentons. Interacts with triplex proteins 1/TRX1 and 2/TRX2; adjacent capsomers are linked together in groups of three by triplexes, heterotrimeric complexes composed of one molecule of TRX1 and two molecules of TRX2. Interacts with scaffold protein; this interaction allows efficient MCP transport to the host nucleus. Interacts with capsid vertex component 2/CVC2. Interacts with the small capsomere-interacting protein/SCP.

Its subcellular location is the virion. The protein localises to the host nucleus. Self-assembles to form an icosahedral capsid with a T=16 symmetry, about 200 nm in diameter, and consisting of 150 hexons and 12 pentons (total of 162 capsomers). Hexons form the edges and faces of the capsid and are each composed of six MCP molecules. In contrast, one penton is found at each of the 12 vertices. Eleven of the pentons are MCP pentamers, while the last vertex is occupied by the portal complex. The capsid is surrounded by a layer of proteinaceous material designated the tegument which, in turn, is enclosed in an envelope of host cell-derived lipids containing virus-encoded glycoproteins. The polypeptide is Major capsid protein (Equus caballus (Horse)).